Here is a 416-residue protein sequence, read N- to C-terminus: E3 ubiquitin-protein ligase RNFT1 (416 aa).

Residues 27–45 show a composition bias toward polar residues; it reads QSSSGHTHHQPGSNDSPSV. Disordered stretches follow at residues 27-50 and 63-116; these read QSSSGHTHHQPGSNDSPSVCMSLP and GDVT…ADSR. A compositionally biased stretch (basic residues) spans 77–86; that stretch reads GARSSSRRVR. 6 consecutive transmembrane segments (helical) span residues 146-166, 184-204, 214-234, 237-257, 265-287, and 302-322; these read LVVQHITGISVGIGLLTTFLY, LQCLWILVFLLFSSLLLYYTF, VFMNPSLGPLHFFDALWVVGI, FIGKFFFMGLKCIILLVPSFV, YWYMALEEVAQCYCMLVSTPVWF, and WHFGILLALLYLILKLLIIFG. Residues 349 to 400 are required for ubiquitin ligase activity and for protection against ER stress-induced cell death; that stretch reads CSEVDGMCAICQAEFIKPIVLVCQHVFCEECISLWFNKEKTCPLCRTVISNQ. An RING-type zinc finger spans residues 356-394; it reads CAICQAEFIKPIVLVCQHVFCEECISLWFNKEKTCPLCR.

The protein resides in the endoplasmic reticulum membrane. The catalysed reaction is S-ubiquitinyl-[E2 ubiquitin-conjugating enzyme]-L-cysteine + [acceptor protein]-L-lysine = [E2 ubiquitin-conjugating enzyme]-L-cysteine + N(6)-ubiquitinyl-[acceptor protein]-L-lysine.. The protein operates within protein modification; protein ubiquitination. Its function is as follows. E3 ubiquitin-protein ligase that acts in the endoplasmic reticulum (ER)-associated degradation (ERAD) pathway, which targets misfolded proteins that accumulate in the endoplasmic reticulum (ER) for ubiquitination and subsequent proteasome-mediated degradation. Protects cells from ER stress-induced apoptosis. This Xenopus tropicalis (Western clawed frog) protein is E3 ubiquitin-protein ligase RNFT1 (rnft1).